Here is a 398-residue protein sequence, read N- to C-terminus: Acetate kinase (398 aa).

A Mg(2+)-binding site is contributed by Asn8. Lys15 contacts ATP. Residue Arg92 participates in substrate binding. The active-site Proton donor/acceptor is Asp149. ATP-binding positions include 209–213 (HLGNG), 283–285 (DFR), and 331–335 (GVGEN). Glu385 is a binding site for Mg(2+).

Belongs to the acetokinase family. Homodimer. Mg(2+) serves as cofactor. The cofactor is Mn(2+).

The protein resides in the cytoplasm. It catalyses the reaction acetate + ATP = acetyl phosphate + ADP. The protein operates within metabolic intermediate biosynthesis; acetyl-CoA biosynthesis; acetyl-CoA from acetate: step 1/2. Its function is as follows. Catalyzes the formation of acetyl phosphate from acetate and ATP. Can also catalyze the reverse reaction. The chain is Acetate kinase from Corynebacterium efficiens (strain DSM 44549 / YS-314 / AJ 12310 / JCM 11189 / NBRC 100395).